The chain runs to 333 residues: Anthranilate phosphoribosyltransferase (333 aa).

5-phospho-alpha-D-ribose 1-diphosphate contacts are provided by residues Gly81, 84-85 (GD), Thr89, 91-94 (NIST), 109-117 (KHGNRSVSS), and Ala121. Gly81 is a binding site for anthranilate. Position 93 (Ser93) interacts with Mg(2+). Residue Asn112 participates in anthranilate binding. Anthranilate is bound at residue Arg167. Residues Asp225 and Glu226 each contribute to the Mg(2+) site.

Belongs to the anthranilate phosphoribosyltransferase family. Homodimer. Mg(2+) is required as a cofactor.

The catalysed reaction is N-(5-phospho-beta-D-ribosyl)anthranilate + diphosphate = 5-phospho-alpha-D-ribose 1-diphosphate + anthranilate. The protein operates within amino-acid biosynthesis; L-tryptophan biosynthesis; L-tryptophan from chorismate: step 2/5. Catalyzes the transfer of the phosphoribosyl group of 5-phosphorylribose-1-pyrophosphate (PRPP) to anthranilate to yield N-(5'-phosphoribosyl)-anthranilate (PRA). This Haemophilus influenzae (strain PittGG) protein is Anthranilate phosphoribosyltransferase.